We begin with the raw amino-acid sequence, 479 residues long: tRNA-dihydrouridine(20) synthase [NAD(P)+] (479 aa).

Residues 14-16 and Q87 each bind FMN; that span reads PMV. C116 serves as the catalytic Proton donor. Residues K159, H187, 221 to 223, and 245 to 246 contribute to the FMN site; these read NGD and AR.

The protein belongs to the Dus family. Dus2 subfamily. FMN serves as cofactor.

It localises to the cytoplasm. It is found in the nucleus. It carries out the reaction 5,6-dihydrouridine(20) in tRNA + NADP(+) = uridine(20) in tRNA + NADPH + H(+). The enzyme catalyses 5,6-dihydrouridine(20) in tRNA + NAD(+) = uridine(20) in tRNA + NADH + H(+). The catalysed reaction is a 5,6-dihydrouridine in mRNA + NAD(+) = a uridine in mRNA + NADH + H(+). It catalyses the reaction a 5,6-dihydrouridine in mRNA + NADP(+) = a uridine in mRNA + NADPH + H(+). In terms of biological role, catalyzes the NADPH-dependent synthesis of dihydrouridine, a modified base found in the D-loop of most tRNAs. Specifically modifies U20 in cytoplasmic tRNAs. Also able to mediate dihydrouridylation of some mRNAs, thereby affecting their translation. The polypeptide is tRNA-dihydrouridine(20) synthase [NAD(P)+] (Schizosaccharomyces pombe (strain 972 / ATCC 24843) (Fission yeast)).